A 350-amino-acid chain; its full sequence is MESFNTFVRQYNDQHAEAIAKGELEALAESSSAFIEKASGIKSRFVMNKEGILDPQRMVPYLPERSNDEWSILCEMAVAAAREALQRAGRSAADIDGVIVACSNLQRAYPAIAVEVQAALGIQGYGYDMNVACSSATFGIQAATTAIQTGQARAILMVNPEICTGHLNFRDRDSHFIFGDACTAVIVERADLAVSKHQFDIVSTRLLTQFSNNIRNNFGFLNRADESGIGKRDKLFVQEGRKVFKDVCPMVAELIGEHLAANEIQVAEVKRFWLHQANLNMNLLITRKLLGRDAEAHEAPVILDSYANTSSAGSVIALHKHQDDLPSGAIGVLSSFGAGYSIGSVILRKH.

Residue Cys133 is part of the active site.

This sequence belongs to the thiolase-like superfamily. Beta-ketoacyl-ACP synthases family.

The catalysed reaction is octanoyl-CoA + malonyl-[ACP] + H(+) = 3-oxodecanoyl-[ACP] + CO2 + CoA. It functions in the pathway lipid metabolism; fatty acid biosynthesis. Functionally, catalyzes the condensation of octanoyl-CoA, obtained from exogenously supplied fatty acids via beta-oxidation, with malonyl-[acyl-carrier protein], forming 3-oxodecanoyl-[acyl-carrier protein], an intermediate of the fatty acid elongation cycle that can then be extended to supply all of the cellular fatty acid needs. The enzyme thereby shunts fatty acid degradation intermediates from the beta-oxidation pathway into de novo fatty acid biosynthesis. This chain is Beta-ketodecanoyl-[acyl-carrier-protein] synthase, found in Pseudomonas aeruginosa (strain ATCC 15692 / DSM 22644 / CIP 104116 / JCM 14847 / LMG 12228 / 1C / PRS 101 / PAO1).